The chain runs to 223 residues: Transmembrane protein 126 (223 aa).

Topologically, residues 1 to 39 (MALSRAKPDELPRDAVVITEDQALKYQWKIITSWDKIGE) are mitochondrial matrix. A helical transmembrane segment spans residues 40–62 (VWSLRYTPGILSALAAGTGAYIN). Residues 63–78 (NHYRTKLRLGGHGRLS) lie on the Mitochondrial intermembrane side of the membrane. Residues 79–99 (TYLPIVAVPAIFTMLAHKFFI) traverse the membrane as a helical segment. Residues 100–123 (QRPILLNPLGECPVCIQMRSAAFQ) are Mitochondrial matrix-facing. Residues 124 to 144 (TSLGIVYPTILAPFAAFLFAT) traverse the membrane as a helical segment. Residues 145-171 (RCYTYRIPSITENPREVFLLWRKFTRP) lie on the Mitochondrial intermembrane side of the membrane. Residues 172–192 (IVPALGTLIGLQALLTMFLTG) form a helical membrane-spanning segment. The Mitochondrial matrix portion of the chain corresponds to 193–223 (QEDKQNFKLMLRMREIEHQVEEEHLPQRMDF).

It belongs to the TMEM126 family. Associates with mitochondrial complex I assembly intermediates during its biogenesis.

It localises to the mitochondrion membrane. Functionally, as part of the MCIA complex, involved in the assembly of the mitochondrial complex I. In Drosophila melanogaster (Fruit fly), this protein is Transmembrane protein 126.